An 855-amino-acid chain; its full sequence is Valine--tRNA ligase (855 aa).

The 'HIGH' region signature appears at 42–52 (PTISGKLHIGH). The 'KMSKS' region motif lies at 574–578 (KMSKS). Lys-577 provides a ligand contact to ATP.

Belongs to the class-I aminoacyl-tRNA synthetase family. ValS type 2 subfamily. In terms of assembly, monomer.

It is found in the cytoplasm. The catalysed reaction is tRNA(Val) + L-valine + ATP = L-valyl-tRNA(Val) + AMP + diphosphate. Its function is as follows. Catalyzes the attachment of valine to tRNA(Val). As ValRS can inadvertently accommodate and process structurally similar amino acids such as threonine, to avoid such errors, it has a 'posttransfer' editing activity that hydrolyzes mischarged Thr-tRNA(Val) in a tRNA-dependent manner. The protein is Valine--tRNA ligase of Wolbachia sp. subsp. Brugia malayi (strain TRS).